A 227-amino-acid chain; its full sequence is uncharacterized protein (227 aa).

The signal sequence occupies residues 1–23 (MKKRFSLIMMTGLLFGLTSPAFA). The VWFA domain occupies 36–227 (NVAVLLDASG…FTQQSLMLSK (192 aa)).

To B.subtilis YwmD.

This is an uncharacterized protein from Bacillus subtilis (strain 168).